A 271-amino-acid polypeptide reads, in one-letter code: S-adenosylmethionine decarboxylase proenzyme (271 aa).

The active-site Schiff-base intermediate with substrate; via pyruvic acid is the serine 121. A Pyruvic acid (Ser); by autocatalysis modification is found at serine 121. The active-site Proton acceptor; for processing activity is histidine 126. The active-site Proton donor; for catalytic activity is the cysteine 149.

It belongs to the prokaryotic AdoMetDC family. Type 2 subfamily. Heterooctamer of four alpha and four beta chains arranged as a tetramer of alpha/beta heterodimers. It depends on pyruvate as a cofactor. Post-translationally, is synthesized initially as an inactive proenzyme. Formation of the active enzyme involves a self-maturation process in which the active site pyruvoyl group is generated from an internal serine residue via an autocatalytic post-translational modification. Two non-identical subunits are generated from the proenzyme in this reaction, and the pyruvate is formed at the N-terminus of the alpha chain, which is derived from the carboxyl end of the proenzyme. The post-translation cleavage follows an unusual pathway, termed non-hydrolytic serinolysis, in which the side chain hydroxyl group of the serine supplies its oxygen atom to form the C-terminus of the beta chain, while the remainder of the serine residue undergoes an oxidative deamination to produce ammonia and the pyruvoyl group blocking the N-terminus of the alpha chain.

It catalyses the reaction S-adenosyl-L-methionine + H(+) = S-adenosyl 3-(methylsulfanyl)propylamine + CO2. The protein operates within amine and polyamine biosynthesis; S-adenosylmethioninamine biosynthesis; S-adenosylmethioninamine from S-adenosyl-L-methionine: step 1/1. Functionally, catalyzes the decarboxylation of S-adenosylmethionine to S-adenosylmethioninamine (dcAdoMet), the propylamine donor required for the synthesis of the polyamines spermine and spermidine from the diamine putrescine. This Clostridium beijerinckii (strain ATCC 51743 / NCIMB 8052) (Clostridium acetobutylicum) protein is S-adenosylmethionine decarboxylase proenzyme.